A 190-amino-acid polypeptide reads, in one-letter code: MIRKINATIEDFEDEKVLIKIGVLTLEAYPSLNVIRYFKKGDQYEFFASLEISEWNTSLYIFKDKIERDVFESLKKVSKIGPRIASKILRKTDAEEFIQMINSQDTALLSSLPGIGKKTAERLISELSNSFSAYSTGADTQSYGNNNLKEAIEALETLGFQRYEIMKVIGQLDLEDLKTEEIIKECLTRL.

Residues Met1–Lys63 are domain I. Residues Asp64 to Ala138 are domain II. The segment at Ala138–Ser142 is flexible linker. The interval Tyr143 to Leu190 is domain III.

It belongs to the RuvA family. Homotetramer. Forms an RuvA(8)-RuvB(12)-Holliday junction (HJ) complex. HJ DNA is sandwiched between 2 RuvA tetramers; dsDNA enters through RuvA and exits via RuvB. An RuvB hexamer assembles on each DNA strand where it exits the tetramer. Each RuvB hexamer is contacted by two RuvA subunits (via domain III) on 2 adjacent RuvB subunits; this complex drives branch migration. In the full resolvosome a probable DNA-RuvA(4)-RuvB(12)-RuvC(2) complex forms which resolves the HJ.

It is found in the cytoplasm. The RuvA-RuvB-RuvC complex processes Holliday junction (HJ) DNA during genetic recombination and DNA repair, while the RuvA-RuvB complex plays an important role in the rescue of blocked DNA replication forks via replication fork reversal (RFR). RuvA specifically binds to HJ cruciform DNA, conferring on it an open structure. The RuvB hexamer acts as an ATP-dependent pump, pulling dsDNA into and through the RuvAB complex. HJ branch migration allows RuvC to scan DNA until it finds its consensus sequence, where it cleaves and resolves the cruciform DNA. The protein is Holliday junction branch migration complex subunit RuvA of Petrotoga mobilis (strain DSM 10674 / SJ95).